Consider the following 718-residue polypeptide: Tensin-4 (718 aa).

The first 14 residues, 1 to 14 (MSSSLLTGGHVVSL), serve as a signal peptide directing secretion. Disordered stretches follow at residues 188 to 244 (RETR…GLRA) and 272 to 437 (LPHS…AKDM). A compositionally biased stretch (polar residues) spans 192 to 207 (SSSNESLIFSGNQGRG). Residues 208-219 (SSPHTPSSLSNS) are compositionally biased toward low complexity. Ser230 is modified (phosphoserine). Over residues 272–304 (LPHSSLSSYPPSSRSLGSPASSSSSLHSLDRGS) the composition is skewed to low complexity. 4 stretches are compositionally biased toward polar residues: residues 306–316 (CVRSSDAQVPS), 337–349 (QASS…TNSM), 367–393 (PAQQ…QATK), and 405–415 (TSPSHLCQATK). The SH2 domain maps to 451–558 (WFKPSITREQ…ALPCKLTIPQ (108 aa)). Residues 585–711 (CHTLYLTSVS…SQVISLVTAL (127 aa)) form the PTB domain.

It belongs to the PTEN phosphatase protein family. In terms of assembly, interacts (via SH2 domain) with Rho GTPase-activating protein DLC1 (via C-terminus); the interaction is independent of DLC1 tyrosine phosphorylation. Interacts with integrin ITGB1; the interaction displaces tensin TNS3 from the ITGB1 cytoplasmic tail and promotes ITGB1 stability. Interacts (via SH2 domain) with E3 ubiquitin-protein ligase CBL (phosphorylated on 'Tyr-781'); the interaction is enhanced in the presence of EGF and reduces interaction of CBL with EGFR. Interacts (via SH2 domain) with receptor tyrosine kinase MET (when phosphorylated); the interaction increases MET protein stability.

It is found in the cell junction. The protein resides in the focal adhesion. The protein localises to the cytoplasm. It localises to the cytoskeleton. Its function is as follows. Promotes EGF-induced cell migration by displacing tensin TNS3 from the cytoplasmic tail of integrin ITGB1 which results in dissociation of TNS3 from focal adhesions, disassembly of actin stress fibers and initiation of cell migration. Suppresses ligand-induced degradation of EGFR by reducing EGFR ubiquitination in the presence of EGF. Increases MET protein stability by inhibiting MET endocytosis and subsequent lysosomal degradation which leads to increased cell survival, proliferation and migration. The chain is Tensin-4 (Tns4) from Rattus norvegicus (Rat).